Reading from the N-terminus, the 601-residue chain is Zinc finger protein 37 (601 aa).

The KRAB domain maps to 1-70 (MATPEPAESD…VRANKNSSSS (70 aa)). The residue at position 3 (Thr3) is a Phosphothreonine. Ser9 is modified (phosphoserine). A compositionally biased stretch (polar residues) spans 30–43 (ETCSNPASMGNQDP). Residues 30 to 254 (ETCSNPASMG…SKSDKAPGSG (225 aa)) are disordered. A compositionally biased stretch (low complexity) spans 60 to 70 (SVRANKNSSSS). The segment covering 77–88 (TGTSAKVQQDGA) has biased composition (polar residues). Composition is skewed to basic and acidic residues over residues 115 to 136 (KSSE…PSEK), 164 to 174 (KKPDTANEYRK), and 183 to 238 (VNRD…EKRK). The C2H2-type 1 zinc-finger motif lies at 257–279 (YECNQCGKVLSHKQGLLDHQRTH). Residues 285 to 303 (YECYECGIAFSQKSHLVVH) form a C2H2-type 2; atypical zinc finger. C2H2-type zinc fingers lie at residues 314 to 337 (YECV…RISH), 343 to 365 (YKCN…IRSH), 371 to 393 (YECK…VRTH), 399 to 421 (YECN…MRIH), 427 to 449 (FECT…QRTH), 455 to 477 (YKCK…MRTH), 483 to 505 (FECN…QRVH), 511 to 533 (YECV…QRTH), 539 to 561 (FECY…QRSH), and 570 to 592 (YECV…MKTH).

Belongs to the krueppel C2H2-type zinc-finger protein family. As to expression, expressed in testes, brain, kidney, spleen, thymus, lung, and at low levels in liver.

It is found in the nucleus. Its function is as follows. May be involved in transcriptional regulation. The polypeptide is Zinc finger protein 37 (Zfp37) (Rattus norvegicus (Rat)).